A 589-amino-acid chain; its full sequence is Serine/threonine-protein phosphatase 2A 65 kDa regulatory subunit A alpha isoform (589 aa).

A2 is subject to N-acetylalanine. HEAT repeat units lie at residues 8-46 (DSLY…GVER), 47-84 (TRSE…GGPE), 85-123 (YVHC…SPSD), 124-161 (LEAH…VSSA), 162-200 (VKAE…ELDN), 201-239 (VKSE…PQED), 240-278 (LEAL…GPEI), 279-321 (TKTD…RENV), 322-360 (IMTQ…GKDN), 361-399 (TIEH…GIRQ), 400-438 (LSQS…GVEF), 439-477 (FDEK…GKEW), 478-516 (AHAT…GQDI), 517-555 (TTKH…DNST), and 556-589 (LQSE…LSLA). Position 280 is an N6-acetyllysine (K280).

The protein belongs to the phosphatase 2A regulatory subunit A family. PP2A consists of a common heterodimeric core enzyme, composed of PPP2CA a 36 kDa catalytic subunit (subunit C) and PPP2R1A a 65 kDa constant regulatory subunit (PR65 or subunit A), that associates with a variety of regulatory subunits. Proteins that associate with the core dimer include three families of regulatory subunits B (the R2/B/PR55/B55, R3/B''/PR72/PR130/PR59 and R5/B'/B56 families), the 48 kDa variable regulatory subunit, viral proteins, and cell signaling molecules. Found in a complex with at least ARL2, PPP2CB, PPP2R1A, PPP2R2A, PPP2R5E and TBCD. Interacts with the PP2A C catalytic subunit PPP2CA. Interacts with the PP2A B subunit PPP2R2A. Interacts with the PP2A B subunit PPP2R5D. Interacts with FOXO1; the interaction dephosphorylates FOXO1 on AKT-mediated phosphorylation sites. Interacts with IPO9. Interacts with TP53 and SGO1. Interacts with PLA2G16; this interaction might decrease PP2A activity. Interacts with CTTNBP2NL. Interacts with GNA12; the interaction promotes protein phosphatase 2A activation causing dephosphorylation of MAPT. Interacts with CIP2A; this interaction stabilizes CIP2A. Interacts with PABIR1/FAM122A. Interacts with ADCY8; antagonizes interaction between ADCY8 and calmodulin. Interacts with CRTC3 (when phosphorylated at 'Ser-391'). Interacts with SPRY2. Part of the core of STRIPAK complexes composed of PP2A catalytic and scaffolding subunits, the striatins (PP2A regulatory subunits), the striatin-associated proteins MOB4, STRIP1 and STRIP2, PDCD10 and members of the STE20 kinases, such as STK24 and STK26. Component of the Integrator-PP2A (INTAC) complex, composed of the Integrator core complex and protein phosphatase 2A subunits PPP2CA and PPP2R1A.

Its subcellular location is the cytoplasm. It is found in the nucleus. It localises to the chromosome. The protein resides in the centromere. The protein localises to the lateral cell membrane. Its subcellular location is the cell projection. It is found in the dendrite. Functionally, the PR65 subunit of protein phosphatase 2A serves as a scaffolding molecule to coordinate the assembly of the catalytic subunit and a variable regulatory B subunit. Upon interaction with GNA12 promotes dephosphorylation of microtubule associated protein TAU/MAPT. Required for proper chromosome segregation and for centromeric localization of SGO1 in mitosis. Together with RACK1 adapter, mediates dephosphorylation of AKT1 at 'Ser-473', preventing AKT1 activation and AKT-mTOR signaling pathway. Dephosphorylation of AKT1 is essential for regulatory T-cells (Treg) homeostasis and stability. Part of the striatin-interacting phosphatase and kinase (STRIPAK) complexes. STRIPAK complexes have critical roles in protein (de)phosphorylation and are regulators of multiple signaling pathways including Hippo, MAPK, nuclear receptor and cytoskeleton remodeling. Different types of STRIPAK complexes are involved in a variety of biological processes such as cell growth, differentiation, apoptosis, metabolism and immune regulation. Key mediator of a quality checkpoint during transcription elongation as part of the Integrator-PP2A (INTAC) complex. The INTAC complex drives premature transcription termination of transcripts that are unfavorably configured for transcriptional elongation: within the INTAC complex, acts as a scaffolding subunit for PPP2CA, which catalyzes dephosphorylation of the C-terminal domain (CTD) of Pol II subunit POLR2A/RPB1 and SUPT5H/SPT5, thereby preventing transcriptional elongation. Regulates the recruitment of the SKA complex to kinetochores. The chain is Serine/threonine-protein phosphatase 2A 65 kDa regulatory subunit A alpha isoform (Ppp2r1a) from Mus musculus (Mouse).